Here is a 421-residue protein sequence, read N- to C-terminus: Trimethyllysine dioxygenase, mitochondrial (421 aa).

The N-terminal 15 residues, 1-15, are a transit peptide targeting the mitochondrion; that stretch reads MWCHRLSHLQSRLQD. N6-acetyllysine is present on Lys236. Fe cation contacts are provided by His242, Asp244, and His389.

The protein belongs to the gamma-BBH/TMLD family. In terms of assembly, homodimer. Fe(2+) serves as cofactor. Requires L-ascorbate as cofactor.

It is found in the mitochondrion matrix. The enzyme catalyses N(6),N(6),N(6)-trimethyl-L-lysine + 2-oxoglutarate + O2 = (3S)-3-hydroxy-N(6),N(6),N(6)-trimethyl-L-lysine + succinate + CO2. It participates in amine and polyamine biosynthesis; carnitine biosynthesis. Converts trimethyllysine (TML) into hydroxytrimethyllysine (HTML). This Bos taurus (Bovine) protein is Trimethyllysine dioxygenase, mitochondrial (TMLHE).